Consider the following 122-residue polypeptide: Large ribosomal subunit protein bL12 (122 aa).

It belongs to the bacterial ribosomal protein bL12 family. As to quaternary structure, homodimer. Part of the ribosomal stalk of the 50S ribosomal subunit. Forms a multimeric L10(L12)X complex, where L10 forms an elongated spine to which 2 to 4 L12 dimers bind in a sequential fashion. Binds GTP-bound translation factors.

Functionally, forms part of the ribosomal stalk which helps the ribosome interact with GTP-bound translation factors. Is thus essential for accurate translation. The chain is Large ribosomal subunit protein bL12 from Enterococcus faecalis (strain ATCC 700802 / V583).